The sequence spans 183 residues: Large ribosomal subunit protein uL10 (183 aa).

Belongs to the universal ribosomal protein uL10 family. As to quaternary structure, part of the ribosomal stalk of the 50S ribosomal subunit. The N-terminus interacts with L11 and the large rRNA to form the base of the stalk. The C-terminus forms an elongated spine to which L12 dimers bind in a sequential fashion forming a multimeric L10(L12)X complex.

Forms part of the ribosomal stalk, playing a central role in the interaction of the ribosome with GTP-bound translation factors. The sequence is that of Large ribosomal subunit protein uL10 from Mesomycoplasma hyopneumoniae (strain 7448) (Mycoplasma hyopneumoniae).